We begin with the raw amino-acid sequence, 657 residues long: Probable potassium transport system protein Kup 1 (657 aa).

The next 12 helical transmembrane spans lie at Val-40 to Gly-60, Val-88 to Leu-108, Trp-135 to Thr-155, Pro-172 to Val-192, Ala-198 to Met-218, Phe-241 to Thr-261, Trp-282 to Leu-302, Leu-320 to Ile-340, Leu-380 to Ser-400, Tyr-402 to Trp-422, Ala-432 to Leu-452, and Leu-454 to Thr-474.

The protein belongs to the HAK/KUP transporter (TC 2.A.72) family.

It localises to the cell inner membrane. It catalyses the reaction K(+)(in) + H(+)(in) = K(+)(out) + H(+)(out). Transport of potassium into the cell. Likely operates as a K(+):H(+) symporter. This Bradyrhizobium diazoefficiens (strain JCM 10833 / BCRC 13528 / IAM 13628 / NBRC 14792 / USDA 110) protein is Probable potassium transport system protein Kup 1.